The following is a 189-amino-acid chain: Elongation factor P (189 aa).

An N6-(3,6-diaminohexanoyl)-5-hydroxylysine modification is found at Lys35.

It belongs to the elongation factor P family. Post-translationally, may be beta-lysylated on the epsilon-amino group of Lys-35 by the combined action of EpmA and EpmB, and then hydroxylated on the C5 position of the same residue by EpmC (if this protein is present). Lysylation is critical for the stimulatory effect of EF-P on peptide-bond formation. The lysylation moiety may extend toward the peptidyltransferase center and stabilize the terminal 3-CCA end of the tRNA. Hydroxylation of the C5 position on Lys-35 may allow additional potential stabilizing hydrogen-bond interactions with the P-tRNA.

It localises to the cytoplasm. It participates in protein biosynthesis; polypeptide chain elongation. Functionally, involved in peptide bond synthesis. Alleviates ribosome stalling that occurs when 3 or more consecutive Pro residues or the sequence PPG is present in a protein, possibly by augmenting the peptidyl transferase activity of the ribosome. Modification of Lys-35 is required for alleviation. The polypeptide is Elongation factor P (Wigglesworthia glossinidia brevipalpis).